The following is a 180-amino-acid chain: Vacuolar ATPase assembly protein VMA22 (180 aa).

Residues 16–37 (QLLGDLEELEGKRTVLNARVEE) are a coiled coil. Positions 92–101 (EEVGPREAGL) are enriched in basic and acidic residues. A disordered region spans residues 92-122 (EEVGPREAGLRRRKGPTKTPEPESSEAPQDP). Residues 153–176 (SLQNRIDWGRSQLRGLQEKLKQLE) adopt a coiled-coil conformation.

In terms of assembly, accessory component of the multisubunit proton-transporting vacuolar (V)-ATPase protein pump. As to expression, expressed throughout the brain.

It is found in the endosome. Its subcellular location is the lysosome. The protein localises to the endoplasmic reticulum-Golgi intermediate compartment. It localises to the cytoplasmic vesicle. The protein resides in the COPI-coated vesicle. It is found in the endoplasmic reticulum. Its function is as follows. Accessory component of the proton-transporting vacuolar (V)-ATPase protein pump involved in intracellular iron homeostasis. In aerobic conditions, required for intracellular iron homeostasis, thus triggering the activity of Fe(2+) prolyl hydroxylase (PHD) enzymes, and leading to HIF1A hydroxylation and subsequent proteasomal degradation. Necessary for endolysosomal acidification and lysosomal degradation. May be involved in Golgi homeostasis. This is Vacuolar ATPase assembly protein VMA22 from Homo sapiens (Human).